The following is a 522-amino-acid chain: GMP synthase [glutamine-hydrolyzing] (522 aa).

The 197-residue stretch at 8 to 204 folds into the Glutamine amidotransferase type-1 domain; that stretch reads RLLIIDFGSQ…FVRLAGFKGD (197 aa). Cys86 acts as the Nucleophile in catalysis. Active-site residues include His179 and Glu181. Positions 205–397 constitute a GMPS ATP-PPase domain; it reads WTMGAYREEA…LGLPASFIGR (193 aa). Residue 232–238 participates in ATP binding; the sequence is SGGVDSS.

Homodimer.

The catalysed reaction is XMP + L-glutamine + ATP + H2O = GMP + L-glutamate + AMP + diphosphate + 2 H(+). It participates in purine metabolism; GMP biosynthesis; GMP from XMP (L-Gln route): step 1/1. Its function is as follows. Catalyzes the synthesis of GMP from XMP. In Roseobacter denitrificans (strain ATCC 33942 / OCh 114) (Erythrobacter sp. (strain OCh 114)), this protein is GMP synthase [glutamine-hydrolyzing].